Reading from the N-terminus, the 480-residue chain is MSDFLNKRFWKYRGKRIRPYMRNNVKLAGAIIFVPVFLLSMFLFWREQLIHFDLSQVIKNFEWNVPLIIKSVLCSVLIAVGSIVASYFLLFDSYKKILHRQKIAKMIFSNKFYEKENVKVRKIFSNETDSKEKITYFPRMYYQVKNNHIYIRIAMDMSRFQNRFLDLGKDLENGLFCDLVDKQMEEGFVCFKLLYDVKKNRISIDDAVAENGVLPLMKHISWQFDKLPHMLIAGGTGGGKTYFMLTIIKACVGLGADVRILDPKNADLADLEEVLPKKVYSQKNGILMCLRKSVDGMMERMDEMKQMSNYKTGENYAYLGLKPVFIFFDEYVAFMDLLDMKERNEALSYMKQLVMLGRQAGYFLVLGAQRPDAKYLADGIRDQFSFRVSLGLMSDTGYGMMFGDVEKAYVNKKETGRGYANVGTGSVLEFYSPIVPKGYDFMSSIKNALVGVEGAQATAVASGSVSDQTASGEGVSEANG.

2 helical membrane-spanning segments follow: residues 25–45 (VKLAGAIIFVPVFLLSMFLFW) and 71–91 (SVLCSVLIAVGSIVASYFLLF). The FtsK domain maps to 217–399 (MKHISWQFDK…LGLMSDTGYG (183 aa)). Residue 234–241 (GGTGGGKT) participates in ATP binding.

The protein resides in the cell membrane. The sequence is that of Ftsk domain-containing protein YdcQ (ydcQ) from Bacillus subtilis (strain 168).